The sequence spans 372 residues: Aminomethyltransferase (372 aa).

The protein belongs to the GcvT family. In terms of assembly, the glycine cleavage system is composed of four proteins: P, T, L and H.

The catalysed reaction is N(6)-[(R)-S(8)-aminomethyldihydrolipoyl]-L-lysyl-[protein] + (6S)-5,6,7,8-tetrahydrofolate = N(6)-[(R)-dihydrolipoyl]-L-lysyl-[protein] + (6R)-5,10-methylene-5,6,7,8-tetrahydrofolate + NH4(+). The glycine cleavage system catalyzes the degradation of glycine. The sequence is that of Aminomethyltransferase from Burkholderia ambifaria (strain MC40-6).